The chain runs to 486 residues: NADH-ubiquinone oxidoreductase chain 4 (486 aa).

13 helical membrane passes run 26-46, 76-96, 113-132, 134-156, 165-185, 209-231, 239-259, 271-291, 298-318, 329-349, 372-392, 407-427, and 452-472; these read HFYLFASNLLLLFIVVLYINF, GLLFGIDGLSLTFILLTVLLI, LYYTLVLAIGLVILLNFWAL, YISFYILFEATLPLLFILIHIYG, FYVLMFTLSGSLFMLLSIVVI, IIWLGLFIAIMVKTPLFPIHVWL, PLAGSMILAGLILKLALYAIL, ILYTPMIYIISLLTIILTSLA, LKVIIAYSSISHMGIAILGVC, IVLGVAHGFVSPALFLIVGGI, LATYIIILSFANIGTPLTGNF, PIIGGISCISVLLAAIYQLKL, and FIMNILIISTLIIGICPQIMY.

This sequence belongs to the complex I subunit 4 family. Complex I is composed of 37 different subunits.

Its subcellular location is the mitochondrion membrane. It carries out the reaction a ubiquinone + NADH + 5 H(+)(in) = a ubiquinol + NAD(+) + 4 H(+)(out). In terms of biological role, core subunit of the mitochondrial membrane respiratory chain NADH dehydrogenase (Complex I) that is believed to belong to the minimal assembly required for catalysis. Complex I functions in the transfer of electrons from NADH to the respiratory chain. The immediate electron acceptor for the enzyme is believed to be ubiquinone. The protein is NADH-ubiquinone oxidoreductase chain 4 (ND4) of Yarrowia lipolytica (strain CLIB 122 / E 150) (Yeast).